The primary structure comprises 119 residues: Large ribosomal subunit protein bL20 (119 aa).

The protein belongs to the bacterial ribosomal protein bL20 family.

In terms of biological role, binds directly to 23S ribosomal RNA and is necessary for the in vitro assembly process of the 50S ribosomal subunit. It is not involved in the protein synthesizing functions of that subunit. This Caldanaerobacter subterraneus subsp. tengcongensis (strain DSM 15242 / JCM 11007 / NBRC 100824 / MB4) (Thermoanaerobacter tengcongensis) protein is Large ribosomal subunit protein bL20.